We begin with the raw amino-acid sequence, 168 residues long: Plastocyanin A, chloroplastic (168 aa).

A chloroplast-targeting transit peptide spans Met1 to Ala69. The 99-residue stretch at Ile70–Asn168 folds into the Plastocyanin-like domain. Positions 106, 153, 156, and 161 each coordinate Cu cation.

This sequence belongs to the plastocyanin family. Cu(2+) serves as cofactor.

It localises to the plastid. The protein localises to the chloroplast thylakoid membrane. Functionally, participates in electron transfer between P700 and the cytochrome b6-f complex in photosystem I. The sequence is that of Plastocyanin A, chloroplastic (PETE) from Populus nigra (Lombardy poplar).